A 348-amino-acid polypeptide reads, in one-letter code: Phenylalanine--tRNA ligase alpha subunit (348 aa).

Glu259 lines the Mg(2+) pocket.

It belongs to the class-II aminoacyl-tRNA synthetase family. Phe-tRNA synthetase alpha subunit type 1 subfamily. Tetramer of two alpha and two beta subunits. Mg(2+) is required as a cofactor.

It localises to the cytoplasm. It carries out the reaction tRNA(Phe) + L-phenylalanine + ATP = L-phenylalanyl-tRNA(Phe) + AMP + diphosphate + H(+). In Enterococcus faecalis (strain ATCC 700802 / V583), this protein is Phenylalanine--tRNA ligase alpha subunit.